Reading from the N-terminus, the 383-residue chain is Trichodiene synthase (383 aa).

The protein belongs to the trichodiene synthase family.

It catalyses the reaction (2E,6E)-farnesyl diphosphate = trichodiene + diphosphate. It functions in the pathway sesquiterpene biosynthesis; trichothecene biosynthesis. Functionally, TS is a member of the terpene cyclase group of enzymes. It catalyzes the isomerization and cyclization of farnesyl pyro-phosphate to form trichodiene, the first cyclic intermediate in the biosynthetic pathway for trichothecenes. It serves to branch trichothecene biosynthesis from the isoprenoid pathway. This Gibberella pulicaris protein is Trichodiene synthase (TRI5).